Consider the following 88-residue polypeptide: LYR motif-containing protein 2 (88 aa).

The N-terminal 19 residues, 1 to 19 (MAASRLPPATLTLKQFVRR), are a transit peptide targeting the mitochondrion.

This sequence belongs to the complex I LYR family.

The protein localises to the mitochondrion. Its function is as follows. Involved in efficient integration of the N-module into mitochondrial respiratory chain complex I. This chain is LYR motif-containing protein 2 (LYRM2), found in Homo sapiens (Human).